The primary structure comprises 104 residues: Large ribosomal subunit protein bL21 (104 aa).

This sequence belongs to the bacterial ribosomal protein bL21 family. Part of the 50S ribosomal subunit. Contacts protein L20.

Functionally, this protein binds to 23S rRNA in the presence of protein L20. The polypeptide is Large ribosomal subunit protein bL21 (Allorhizobium ampelinum (strain ATCC BAA-846 / DSM 112012 / S4) (Agrobacterium vitis (strain S4))).